Reading from the N-terminus, the 463-residue chain is Bifunctional protein HldE (463 aa).

The tract at residues 1–311 is ribokinase; the sequence is MKKILVVGDL…EEIALILNQT (311 aa). Residue 191-194 participates in ATP binding; sequence NRFE. Residue Asp-260 is part of the active site. The segment at 334–463 is cytidylyltransferase; sequence FTNGCFDLLH…IEKIKRTCND (130 aa).

This sequence in the N-terminal section; belongs to the carbohydrate kinase PfkB family. In the C-terminal section; belongs to the cytidylyltransferase family. Homodimer.

It catalyses the reaction D-glycero-beta-D-manno-heptose 7-phosphate + ATP = D-glycero-beta-D-manno-heptose 1,7-bisphosphate + ADP + H(+). It carries out the reaction D-glycero-beta-D-manno-heptose 1-phosphate + ATP + H(+) = ADP-D-glycero-beta-D-manno-heptose + diphosphate. The protein operates within nucleotide-sugar biosynthesis; ADP-L-glycero-beta-D-manno-heptose biosynthesis; ADP-L-glycero-beta-D-manno-heptose from D-glycero-beta-D-manno-heptose 7-phosphate: step 1/4. Its pathway is nucleotide-sugar biosynthesis; ADP-L-glycero-beta-D-manno-heptose biosynthesis; ADP-L-glycero-beta-D-manno-heptose from D-glycero-beta-D-manno-heptose 7-phosphate: step 3/4. Catalyzes the phosphorylation of D-glycero-D-manno-heptose 7-phosphate at the C-1 position to selectively form D-glycero-beta-D-manno-heptose-1,7-bisphosphate. Its function is as follows. Catalyzes the ADP transfer from ATP to D-glycero-beta-D-manno-heptose 1-phosphate, yielding ADP-D-glycero-beta-D-manno-heptose. The polypeptide is Bifunctional protein HldE (Helicobacter pylori (strain G27)).